Consider the following 78-residue polypeptide: Short neurotoxin OH-5 (78 aa).

The signal sequence occupies residues 1 to 21; the sequence is MKNLLLTFLVVTIVCLDLGYT. Disulfide bonds link Cys-24–Cys-40, Cys-33–Cys-58, Cys-62–Cys-70, and Cys-71–Cys-76.

This sequence belongs to the three-finger toxin family. Short-chain subfamily. Expressed by the venom gland.

It is found in the secreted. Functionally, this three-finger toxin binds and inhibits the nicotinic acetylcholine receptor (nAChR). The polypeptide is Short neurotoxin OH-5 (Ophiophagus hannah (King cobra)).